The following is a 140-amino-acid chain: Small ribosomal subunit protein uS19 (140 aa).

Belongs to the universal ribosomal protein uS19 family.

Functionally, protein S19 forms a complex with S13 that binds strongly to the 16S ribosomal RNA. The polypeptide is Small ribosomal subunit protein uS19 (Methanocella arvoryzae (strain DSM 22066 / NBRC 105507 / MRE50)).